The primary structure comprises 437 residues: GTPase Era, mitochondrial (437 aa).

The N-terminal 20 residues, 1 to 20, are a transit peptide targeting the mitochondrion; the sequence is MAAPRRYCAGLVRALLGARQ. In terms of domain architecture, Era-type G spans 112 to 330; that stretch reads RVLRVVLLGA…QYLLTQAQPG (219 aa). The segment at 120–127 is G1; sequence GAPNAGKS. 120–127 contacts GTP; the sequence is GAPNAGKS. Residues 146 to 150 form a G2 region; that stretch reads HTTRC. The G3 stretch occupies residues 167 to 170; sequence DTPG. 167–171 is a binding site for GTP; sequence DTPGI. S173 carries the phosphoserine modification. 236 to 239 provides a ligand contact to GTP; sequence NKVD. Residues 236–239 form a G4 region; sequence NKVD. A disordered region spans residues 270-292; that stretch reads LRSRSSTHCPGPETEGPNAHSVR. The tract at residues 308–310 is G5; sequence LSA. Residues 360–437 form the KH type-2 domain; sequence LPEEVPYGVQ…LIRLSVKLLK (78 aa).

The protein belongs to the TRAFAC class TrmE-Era-EngA-EngB-Septin-like GTPase superfamily. Era GTPase family.

The protein localises to the mitochondrion matrix. It is found in the mitochondrion inner membrane. Functionally, probable GTPase that plays a role in the mitochondrial ribosomal small subunit assembly. Specifically binds the 12S mitochondrial rRNA (12S mt-rRNA) to a 33 nucleotide section delineating the 3' terminal stem-loop region. May act as a chaperone that protects the 12S mt-rRNA on the 28S mitoribosomal subunit during ribosomal small subunit assembly. The chain is GTPase Era, mitochondrial (Eral1) from Mus musculus (Mouse).